A 5202-amino-acid chain; its full sequence is Usherin (5202 aa).

Positions 1 to 31 (MNCPVLSLGSGFLFQVIEMLIFAYFASISLT) are cleaved as a signal peptide. Over 32–5042 (ESRGLFPRLE…KSTEFYSELW (5011 aa)) the chain is Extracellular. In terms of domain architecture, Laminin N-terminal spans 271–517 (QDFRLYQVAL…AVDEITISGR (247 aa)). N-linked (GlcNAc...) asparagine glycans are attached at residues asparagine 361 and asparagine 451. Disulfide bonds link cysteine 518–cysteine 527, cysteine 520–cysteine 536, cysteine 538–cysteine 549, cysteine 552–cysteine 572, cysteine 575–cysteine 584, cysteine 577–cysteine 605, cysteine 608–cysteine 617, cysteine 620–cysteine 638, cysteine 641–cysteine 655, cysteine 643–cysteine 662, cysteine 664–cysteine 673, cysteine 676–cysteine 691, cysteine 694–cysteine 708, cysteine 696–cysteine 715, cysteine 717–cysteine 726, cysteine 729–cysteine 744, cysteine 747–cysteine 759, cysteine 749–cysteine 766, cysteine 768–cysteine 777, cysteine 780–cysteine 792, cysteine 795–cysteine 808, cysteine 797–cysteine 815, cysteine 817–cysteine 826, cysteine 829–cysteine 844, cysteine 847–cysteine 861, cysteine 849–cysteine 868, cysteine 870–cysteine 879, cysteine 882–cysteine 897, cysteine 900–cysteine 913, cysteine 902–cysteine 920, cysteine 922–cysteine 931, cysteine 934–cysteine 948, cysteine 951–cysteine 963, cysteine 953–cysteine 970, cysteine 972–cysteine 982, cysteine 985–cysteine 999, cysteine 1002–cysteine 1014, cysteine 1004–cysteine 1021, cysteine 1023–cysteine 1032, and cysteine 1035–cysteine 1050. 10 Laminin EGF-like domains span residues 518–574 (CQCH…NCKP), 575–640 (CQCN…VCKP), 641–693 (CDCD…GCSP), 694–746 (CNCN…GCEP), 747–794 (CQCN…NCKA), 795–846 (CDCD…LCLP), 847–899 (CNCD…HCQM), 900–950 (CECD…GCLP), 951–1001 (CSCH…RCQP), and 1002–1052 (CNCH…GCSK). Residues asparagine 587 and asparagine 611 are each glycosylated (N-linked (GlcNAc...) asparagine). Asparagine 650 carries an N-linked (GlcNAc...) asparagine glycan. Asparagine 697 carries N-linked (GlcNAc...) asparagine glycosylation. Asparagine 839, asparagine 856, and asparagine 862 each carry an N-linked (GlcNAc...) asparagine glycan. The N-linked (GlcNAc...) asparagine glycan is linked to asparagine 888. N-linked (GlcNAc...) asparagine glycosylation is present at asparagine 944. The N-linked (GlcNAc...) asparagine glycan is linked to asparagine 1011. 4 Fibronectin type-III domains span residues 1058-1146 (PPPR…TKPG), 1148-1244 (PEGN…APPQ), 1245-1363 (RLSP…SAPV), and 1364-1468 (FMIP…AAPA). Asparagine 1071, asparagine 1151, and asparagine 1174 each carry an N-linked (GlcNAc...) asparagine glycan. N-linked (GlcNAc...) asparagine glycans are attached at residues asparagine 1379, asparagine 1388, asparagine 1479, and asparagine 1635. Laminin G-like domains follow at residues 1517–1709 (MKGI…WEGC) and 1714–1891 (NEGA…LDGC). A disulfide bridge links cysteine 1672 with cysteine 1709. Residue asparagine 1779 is glycosylated (N-linked (GlcNAc...) asparagine). Cysteine 1862 and cysteine 1891 form a disulfide bridge. Fibronectin type-III domains are found at residues 1869 to 1955 (TRGA…AAPQ), 1957 to 2054 (VPTP…TPQE), 2055 to 2144 (APQE…LPPE), 2145 to 2239 (HVDS…TDED), 2243 to 2330 (GVPA…APPE), 2331 to 2433 (GTVN…MPPG), 2437 to 2531 (GVLP…TAED), 2535 to 2622 (PVVP…TLPG), 2624 to 2722 (PEGI…TRPS), 2726 to 2819 (GVQP…THPT), 2820 to 2923 (VPQN…TLAG), 2927 to 3018 (RGAN…TCDG), 3022 to 3112 (GMLP…TPSD), and 3113 to 3209 (IPTP…CCEE). 14 N-linked (GlcNAc...) asparagine glycosylation sites follow: asparagine 1903, asparagine 2011, asparagine 2014, asparagine 2048, asparagine 2130, asparagine 2182, asparagine 2195, asparagine 2258, asparagine 2285, asparagine 2322, asparagine 2377, asparagine 2382, asparagine 2407, and asparagine 2413. Residues asparagine 2581, asparagine 2584, asparagine 2656, asparagine 2710, asparagine 2770, and asparagine 2788 are each glycosylated (N-linked (GlcNAc...) asparagine). N-linked (GlcNAc...) asparagine glycans are attached at residues asparagine 2930, asparagine 2937, asparagine 2970, asparagine 3032, and asparagine 3099. N-linked (GlcNAc...) asparagine glycans are attached at residues asparagine 3217, asparagine 3330, asparagine 3419, and asparagine 3433. Disulfide bonds link cysteine 3371/cysteine 3444 and cysteine 3399/cysteine 3425. Fibronectin type-III domains are found at residues 3403 to 3497 (CPAS…TKED), 3501 to 3589 (GVSP…TQGV), 3592 to 3682 (SILP…AAPE), 3684 to 3770 (VWVT…TPMS), 3774 to 3865 (EIYP…TPEA), 3866 to 3963 (APMD…TLEA), 3964 to 4067 (PPQD…SSPS), 4068 to 4153 (GLRN…TDEA), 4157 to 4261 (SQLA…TLQA), 4262 to 4357 (PPEG…AAPS), 4358 to 4445 (EVSP…ALPE), 4446 to 4530 (NMDS…TSPS), 4534 to 4630 (GMEP…TPEI), 4636 to 4733 (PPPH…TGPA), 4734 to 4827 (PPEG…THPA), and 4828 to 4927 (PPSG…SFTT). N-linked (GlcNAc...) asparagine glycosylation is found at asparagine 3653, asparagine 3694, asparagine 3733, asparagine 3780, and asparagine 3849. Asparagine 3984 is a glycosylation site (N-linked (GlcNAc...) asparagine). N-linked (GlcNAc...) asparagine glycans are attached at residues asparagine 4202, asparagine 4226, asparagine 4317, and asparagine 4418. Residues 4518–4541 (ILSPLVKDRTSPSAPSGMEPPKLQ) are disordered. Asparagine 4564, asparagine 4583, asparagine 4691, asparagine 4754, and asparagine 4800 each carry an N-linked (GlcNAc...) asparagine glycan. N-linked (GlcNAc...) asparagine glycosylation is found at asparagine 4943 and asparagine 4950. The helical transmembrane segment at 5043–5063 (FIVLMAMLGLILLAIFLSLIL) threads the bilayer. Residues 5064–5202 (QRKIHKEPYI…ERTTFTDTHL (139 aa)) lie on the Cytoplasmic side of the membrane. A PDZ-binding motif is present at residues 5200-5202 (THL).

In terms of assembly, interacts with collagen IV and fibronectin via its laminin EGF-like domains. Interaction with collagen may be required for stable integration into the basement membrane. Interacts with NINL. Interacts with USH1C. Component of USH2 complex, composed of ADGRV1, PDZD7, USH2A and WHRN. Interacts with ADGRV1/MASS1 (via N-terminal PDZ domain). Interacts (via the cytoplasmic region) with WHRN. Interacts (via the cytoplasmic region) with PDZD7. Interacts (via the cytoplasmic region) with VEZT and MYO7A (via MyTH4-FERM domains); the interaction associates VEZT with the USH2 complex at the stereocilia base. Present in the basement membrane of many, but not all tissues. Expressed in retina, cochlea, small and large intestine, pancreas, bladder, prostate, esophagus, trachea, thymus, salivary glands, placenta, ovary, fallopian tube, uterus and testis. Absent in many other tissues such as heart, lung, liver, kidney and brain. In the retina, it is present in the basement membranes in the Bruch's layer choroid capillary basement membranes, where it localizes just beneath the retinal pigment epithelial cells (at protein level). Weakly expressed. Isoform 2 is expressed in fetal eye, cochlea and heart, and at very low level in brain, CNS, intestine, skeleton, tongue, kidney and lung. Isoform 2 is not expressed in stomach and liver. In adult tissues, isoform 2 is expressed in neural retina and testis, and at low level in brain, heart, kidney and liver. Isoform 1 displays a similar pattern of expression but is expressed at very low level in fetal cochlea.

The protein localises to the cell projection. Its subcellular location is the stereocilium membrane. It is found in the secreted. In terms of biological role, involved in hearing and vision as member of the USH2 complex. In the inner ear, required for the maintenance of the hair bundle ankle formation, which connects growing stereocilia in developing cochlear hair cells. In retina photoreceptors, the USH2 complex is required for the maintenance of periciliary membrane complex that seems to play a role in regulating intracellular protein transport. This is Usherin (USH2A) from Homo sapiens (Human).